The chain runs to 210 residues: tRNA (guanine-N(7)-)-methyltransferase (210 aa).

Positions 36, 61, 90, and 112 each coordinate S-adenosyl-L-methionine. Residue Asp112 is part of the active site. Residues Lys116, Asp148, and Thr188 to Glu191 each bind substrate.

Belongs to the class I-like SAM-binding methyltransferase superfamily. TrmB family.

The catalysed reaction is guanosine(46) in tRNA + S-adenosyl-L-methionine = N(7)-methylguanosine(46) in tRNA + S-adenosyl-L-homocysteine. It functions in the pathway tRNA modification; N(7)-methylguanine-tRNA biosynthesis. Catalyzes the formation of N(7)-methylguanine at position 46 (m7G46) in tRNA. This is tRNA (guanine-N(7)-)-methyltransferase from Mycoplasma genitalium (strain ATCC 33530 / DSM 19775 / NCTC 10195 / G37) (Mycoplasmoides genitalium).